The primary structure comprises 64 residues: Bubble protein (64 aa).

4 disulfide bridges follow: Cys-3/Cys-30, Cys-18/Cys-38, Cys-28/Cys-54, and Cys-49/Cys-64.

It is found in the secreted. Functionally, may act as a toxin. May recognize a molecule or part of a molecule with a negatively charged surface potential. This chain is Bubble protein, found in Penicillium brevicompactum.